A 340-amino-acid chain; its full sequence is Methionine import ATP-binding protein MetN 2 (340 aa).

In terms of domain architecture, ABC transporter spans V5–V244. G41–S48 provides a ligand contact to ATP.

Belongs to the ABC transporter superfamily. Methionine importer (TC 3.A.1.24) family. In terms of assembly, the complex is composed of two ATP-binding proteins (MetN), two transmembrane proteins (MetI) and a solute-binding protein (MetQ).

The protein resides in the cell membrane. The catalysed reaction is L-methionine(out) + ATP + H2O = L-methionine(in) + ADP + phosphate + H(+). The enzyme catalyses D-methionine(out) + ATP + H2O = D-methionine(in) + ADP + phosphate + H(+). Part of the ABC transporter complex MetNIQ involved in methionine import. Responsible for energy coupling to the transport system. This Rhodococcus jostii (strain RHA1) protein is Methionine import ATP-binding protein MetN 2.